We begin with the raw amino-acid sequence, 257 residues long: HTH-type transcriptional activator mta (257 aa).

Residues 2–71 enclose the HTH merR-type domain; sequence KYQVKQVAEI…LDEIKEMLDH (70 aa). Residues 5-24 constitute a DNA-binding region (H-T-H motif); it reads VKQVAEISGVSIRTLHHYDN. Residues 71–74 are hinge; sequence HPNF. Residues 76–104 form an essential for dimerization region; sequence RKAALQSQKEILMKKKQRMDEMIQTIDRT. Residues 76-107 adopt a coiled-coil conformation; the sequence is RKAALQSQKEILMKKKQRMDEMIQTIDRTLLS.

Homodimer.

The protein resides in the cytoplasm. Functionally, global transcriptional regulator that activates transcription of bmr and blt by binding directly to their promoter. Also stimulates the expression of the mta gene itself, ydfK and ymfE. The sequence is that of HTH-type transcriptional activator mta (mta) from Bacillus subtilis (strain 168).